The primary structure comprises 350 residues: Putative isomerase YbhH (350 aa).

It belongs to the PrpF family.

The sequence is that of Putative isomerase YbhH (ybhH) from Escherichia coli O6:H1 (strain CFT073 / ATCC 700928 / UPEC).